Reading from the N-terminus, the 274-residue chain is 3-methyl-2-oxobutanoate hydroxymethyltransferase (274 aa).

Mg(2+)-binding residues include aspartate 50 and aspartate 89. Residues aspartate 50 to serine 51, aspartate 89, and lysine 119 each bind 3-methyl-2-oxobutanoate. Glutamate 121 lines the Mg(2+) pocket. Glutamate 188 acts as the Proton acceptor in catalysis.

This sequence belongs to the PanB family. Homodecamer; pentamer of dimers. Mg(2+) is required as a cofactor.

It is found in the cytoplasm. It catalyses the reaction 3-methyl-2-oxobutanoate + (6R)-5,10-methylene-5,6,7,8-tetrahydrofolate + H2O = 2-dehydropantoate + (6S)-5,6,7,8-tetrahydrofolate. It functions in the pathway cofactor biosynthesis; (R)-pantothenate biosynthesis; (R)-pantoate from 3-methyl-2-oxobutanoate: step 1/2. In terms of biological role, catalyzes the reversible reaction in which hydroxymethyl group from 5,10-methylenetetrahydrofolate is transferred onto alpha-ketoisovalerate to form ketopantoate. This is 3-methyl-2-oxobutanoate hydroxymethyltransferase from Methylorubrum populi (strain ATCC BAA-705 / NCIMB 13946 / BJ001) (Methylobacterium populi).